Reading from the N-terminus, the 341-residue chain is Anthranilate phosphoribosyltransferase (341 aa).

5-phospho-alpha-D-ribose 1-diphosphate is bound by residues Gly-79, Gly-82–Asp-83, Thr-87, Asn-89–Thr-92, Lys-107–Ser-115, and Ser-119. Gly-79 contributes to the anthranilate binding site. Residue Ser-91 participates in Mg(2+) binding. Asn-110 is an anthranilate binding site. Anthranilate is bound at residue Arg-165. Asp-224 and Glu-225 together coordinate Mg(2+).

Belongs to the anthranilate phosphoribosyltransferase family. In terms of assembly, homodimer. Mg(2+) is required as a cofactor.

The catalysed reaction is N-(5-phospho-beta-D-ribosyl)anthranilate + diphosphate = 5-phospho-alpha-D-ribose 1-diphosphate + anthranilate. It functions in the pathway amino-acid biosynthesis; L-tryptophan biosynthesis; L-tryptophan from chorismate: step 2/5. Functionally, catalyzes the transfer of the phosphoribosyl group of 5-phosphorylribose-1-pyrophosphate (PRPP) to anthranilate to yield N-(5'-phosphoribosyl)-anthranilate (PRA). The chain is Anthranilate phosphoribosyltransferase from Bacillus cereus (strain ZK / E33L).